We begin with the raw amino-acid sequence, 247 residues long: TM2 domain-containing protein 3 (247 aa).

Positions 1 to 25 are cleaved as a signal peptide; that stretch reads MIPMMTLKRVCRVLLFITQMYVLSG. Residues 26-179 lie on the Extracellular side of the membrane; that stretch reads RGFLSFEYSE…RTFPKMLYCN (154 aa). N-linked (GlcNAc...) asparagine glycans are attached at residues Asn-87, Asn-99, Asn-139, Asn-155, Asn-169, and Asn-179. A helical transmembrane segment spans residues 180–200; sequence WTGGYKWSTALALSITLGGFG. Positions 183 to 231 constitute a TM2 domain; that stretch reads GYKWSTALALSITLGGFGADRFYLGQWREGLGKLFSFGGLGIWTLIDVF. At 201–215 the chain is on the cytoplasmic side; it reads ADRFYLGQWREGLGK. The helical transmembrane segment at 216 to 236 threads the bilayer; it reads LFSFGGLGIWTLIDVFLISVG. The Extracellular segment spans residues 237–247; sequence YVGPADGSLYI.

The protein belongs to the TM2 family.

The protein localises to the membrane. The sequence is that of TM2 domain-containing protein 3 (tm2d3) from Xenopus tropicalis (Western clawed frog).